The chain runs to 930 residues: Isoleucine--tRNA ligase (930 aa).

A 'HIGH' region motif is present at residues 57 to 67 (PYANGNIHVGH). Glu554 contacts L-isoleucyl-5'-AMP. A 'KMSKS' region motif is present at residues 595-599 (KMSKS). Lys598 contacts ATP. Positions 888, 891, 908, and 911 each coordinate Zn(2+).

The protein belongs to the class-I aminoacyl-tRNA synthetase family. IleS type 1 subfamily. In terms of assembly, monomer. It depends on Zn(2+) as a cofactor.

The protein localises to the cytoplasm. The catalysed reaction is tRNA(Ile) + L-isoleucine + ATP = L-isoleucyl-tRNA(Ile) + AMP + diphosphate. In terms of biological role, catalyzes the attachment of isoleucine to tRNA(Ile). As IleRS can inadvertently accommodate and process structurally similar amino acids such as valine, to avoid such errors it has two additional distinct tRNA(Ile)-dependent editing activities. One activity is designated as 'pretransfer' editing and involves the hydrolysis of activated Val-AMP. The other activity is designated 'posttransfer' editing and involves deacylation of mischarged Val-tRNA(Ile). In Streptococcus pneumoniae (strain CGSP14), this protein is Isoleucine--tRNA ligase.